Here is an 87-residue protein sequence, read N- to C-terminus: Small ribosomal subunit protein uS15c (87 aa).

This sequence belongs to the universal ribosomal protein uS15 family. As to quaternary structure, part of the 30S ribosomal subunit.

It is found in the plastid. Its subcellular location is the chloroplast. In Nicotiana tabacum (Common tobacco), this protein is Small ribosomal subunit protein uS15c (rps15).